The chain runs to 250 residues: Probable transcriptional regulatory protein SYNAS_07390 (250 aa).

Belongs to the TACO1 family.

The protein resides in the cytoplasm. The sequence is that of Probable transcriptional regulatory protein SYNAS_07390 from Syntrophus aciditrophicus (strain SB).